A 192-amino-acid chain; its full sequence is Neurogenic differentiation factor 1 (192 aa).

A bHLH domain is found at 19–71 (VRRVKANGRERARMHGLNNALDMLREYIPITTQHQKLSKIETLRLARNYIDAL). Residues 116–192 (PSQFDIFSDP…SHQNTFNYSP (77 aa)) are disordered. Positions 139–163 (SSFSSSSPSSSCSPPQYYYSPTQPS) are enriched in low complexity.

As to expression, expressed in neuroblasts of the AB lineage. More specifically in precursors of the embryonic ventral cord motor neurons. Expressed to a lesser degree in the EMS lineage which generates mostly endoderm and mesoderm tissues.

The protein localises to the nucleus. Functionally, acts as a transcriptional regulator whose activity is required for several aspects of motor neuron fate specification, including cell division patterns, proper spatiotemporal expression of fate-specific markers, and normal axonal morphology and pathfinding. Involved in regulating glial specification. This is Neurogenic differentiation factor 1 (cnd-1) from Caenorhabditis elegans.